The chain runs to 390 residues: Galactokinase (390 aa).

A substrate-binding site is contributed by 34 to 37 (EHTD). ATP-binding positions include serine 68 and 122 to 128 (GSGLSSS). Mg(2+)-binding residues include serine 128 and glutamate 160. Aspartate 172 acts as the Proton acceptor in catalysis. Tyrosine 221 is a substrate binding site.

Belongs to the GHMP kinase family. GalK subfamily.

The protein resides in the cytoplasm. The catalysed reaction is alpha-D-galactose + ATP = alpha-D-galactose 1-phosphate + ADP + H(+). Its pathway is carbohydrate metabolism; galactose metabolism. Functionally, catalyzes the transfer of the gamma-phosphate of ATP to D-galactose to form alpha-D-galactose-1-phosphate (Gal-1-P). The protein is Galactokinase of Chloroflexus aurantiacus (strain ATCC 29366 / DSM 635 / J-10-fl).